A 557-amino-acid chain; its full sequence is Formate--tetrahydrofolate ligase (557 aa).

Position 67–74 (Thr67–Ser74) interacts with ATP.

It belongs to the formate--tetrahydrofolate ligase family.

The enzyme catalyses (6S)-5,6,7,8-tetrahydrofolate + formate + ATP = (6R)-10-formyltetrahydrofolate + ADP + phosphate. It participates in one-carbon metabolism; tetrahydrofolate interconversion. The sequence is that of Formate--tetrahydrofolate ligase from Latilactobacillus sakei subsp. sakei (strain 23K) (Lactobacillus sakei subsp. sakei).